Reading from the N-terminus, the 167-residue chain is ASQKRPSQRHGSKYLATASTMDHARHGFLPRHRDTGILDSIGRFFGSDRAAPKRGSGKDSHHAARTTHYGSLPQKSQRSQDENPVVHFFKNIVTPRTPPPSQGKGRGLSLSRFSWGAEGQKPGFGYGGRADYKSKGFKGAHDAQGTLSKIFKLGGRDSRSGSPMARR.

Ala-1 bears the N-acetylalanine mark. 2 positions are modified to phosphoserine: Ser-7 and Ser-12. Tyr-14 is subject to Phosphotyrosine. Thr-17 carries the phosphothreonine modification. The residue at position 19 (Ser-19) is a Phosphoserine. Thr-20 is subject to Phosphothreonine. Citrulline occurs at positions 25 and 31. Thr-35 bears the Phosphothreonine mark. The residue at position 40 (Ser-40) is a Phosphoserine. Arg-43 and Arg-49 each carry omega-N-methylarginine. The tract at residues 45–87 (FGSDRAAPKRGSGKDSHHAARTTHYGSLPQKSQRSQDENPVVH) is induces experimental autoimmune encephalomyelitis (EAE) 1. The interval 46 to 114 (GSDRAAPKRG…GRGLSLSRFS (69 aa)) is disordered. Ser-56 is modified (phosphoserine). The residue at position 67 (Thr-67) is a Phosphothreonine. A Phosphotyrosine modification is found at Tyr-69. Residue Ser-76 is modified to Phosphoserine. Thr-94 and Thr-97 each carry phosphothreonine. Position 102 is a deamidated glutamine (Gln-102). Residue Arg-106 is modified to Omega-N-methylarginine; alternate. Arg-106 is modified (symmetric dimethylarginine; alternate). Phosphoserine is present on Ser-114. Positions 114–122 (SWGAEGQKP) are induces experimental autoimmune encephalomyelitis (EAE) 2. Lys-121 carries the post-translational modification N6-acetyllysine. The residue at position 129 (Arg-129) is a Citrulline. The segment at 136–167 (GFKGAHDAQGTLSKIFKLGGRDSRSGSPMARR) is disordered. At Gln-144 the chain carries Deamidated glutamine. Residue Arg-156 is modified to Citrulline. The residue at position 158 (Ser-158) is a Phosphoserine. The residue at position 162 (Ser-162) is a Phosphoserine; by UHMK1. A Citrulline modification is found at Arg-167.

It belongs to the myelin basic protein family. Homodimer. At least 5 charge isomers; C1 (the most cationic, least modified, and most abundant form), C2, C3, C4 and C5 (the least cationic form); are produced as a result of optional post-translational modifications such as phosphorylation of serine or threonine residues, deamidation of glutamine or asparagine residues, citrullination and methylation of arginine residues. C1 and C2 are unphosphorylated, C3 and C4 are monophosphorylated and C5 is phosphorylated at two positions. In terms of processing, phosphorylated by TAOK2, VRK2, MAPK11, MAPK12, MAPK14 and MINK1. Post-translationally, proteolytically cleaved in B cell lysosomes by cathepsin CTSG which degrades the major immunogenic MBP epitope and prevents the activation of MBP-specific autoreactive T cells. As to expression, found in both the central and the peripheral nervous system.

The protein localises to the myelin membrane. Is, with PLP, the most abundant protein component of the myelin membrane in the CNS. Has a role in both the formation and stabilization of this compact multilayer arrangement of bilayers. Each splice variant and charge isomer may have a specialized function in the assembly of an optimized, biochemically functional myelin membrane. The chain is Myelin basic protein (MBP) from Cavia porcellus (Guinea pig).